The chain runs to 524 residues: Cytochrome P450 4F3 (524 aa).

Residues 15–35 (AASPWLLLLLVGASCLLAYIL) traverse the membrane as a helical segment. Position 468 (Cys468) interacts with heme.

The protein belongs to the cytochrome P450 family. Requires heme as cofactor.

It localises to the endoplasmic reticulum membrane. The protein resides in the microsome membrane. It catalyses the reaction leukotriene B4 + reduced [NADPH--hemoprotein reductase] + O2 = 18-hydroxy-leukotriene B4 + oxidized [NADPH--hemoprotein reductase] + H2O + H(+). The catalysed reaction is leukotriene B4 + reduced [NADPH--hemoprotein reductase] + O2 = 19-hydroxy-leukotriene B4 + oxidized [NADPH--hemoprotein reductase] + H2O + H(+). It participates in lipid metabolism; leukotriene B4 degradation. A cytochrome P450 monooxygenase involved in the metabolism of the pro-inflammatory lipid mediator leukotriene B4 (LTB4). Hydroxylates at the omega-1 and omega-2 positions LTB4. This oxidation step leads to LTB4 inactivation, which is postulated to be a crucial part of the resolution of inflammation. Mechanistically, uses molecular oxygen inserting one oxygen atom into a substrate, and reducing the second into a water molecule, with two electrons provided by NADPH via cytochrome P450 reductase (CPR; NADPH-ferrihemoprotein reductase). This is Cytochrome P450 4F3 from Rattus norvegicus (Rat).